The chain runs to 219 residues: Large ribosomal subunit protein uL3 (219 aa).

The disordered stretch occupies residues 124 to 154 (FSGSIKRHNQSEGPKSHGSRYHRRPGSMGPI).

Belongs to the universal ribosomal protein uL3 family. In terms of assembly, part of the 50S ribosomal subunit. Forms a cluster with proteins L14 and L19.

One of the primary rRNA binding proteins, it binds directly near the 3'-end of the 23S rRNA, where it nucleates assembly of the 50S subunit. In Phytoplasma mali (strain AT), this protein is Large ribosomal subunit protein uL3.